The primary structure comprises 486 residues: Siroheme synthase (486 aa).

Positions methionine 1–leucine 203 are precorrin-2 dehydrogenase /sirohydrochlorin ferrochelatase. NAD(+) contacts are provided by residues alanine 22–valine 23 and lysine 43–histidine 44. Serine 128 carries the phosphoserine modification. Residues glycine 217–alanine 486 form a uroporphyrinogen-III C-methyltransferase region. Proline 226 serves as a coordination point for S-adenosyl-L-methionine. The active-site Proton acceptor is the aspartate 249. The active-site Proton donor is lysine 271. Residues glycine 302–aspartate 304, valine 307, threonine 332–alanine 333, methionine 384, and glycine 413 contribute to the S-adenosyl-L-methionine site.

This sequence in the N-terminal section; belongs to the precorrin-2 dehydrogenase / sirohydrochlorin ferrochelatase family. In the C-terminal section; belongs to the precorrin methyltransferase family.

The enzyme catalyses uroporphyrinogen III + 2 S-adenosyl-L-methionine = precorrin-2 + 2 S-adenosyl-L-homocysteine + H(+). It carries out the reaction precorrin-2 + NAD(+) = sirohydrochlorin + NADH + 2 H(+). The catalysed reaction is siroheme + 2 H(+) = sirohydrochlorin + Fe(2+). Its pathway is cofactor biosynthesis; adenosylcobalamin biosynthesis; precorrin-2 from uroporphyrinogen III: step 1/1. It functions in the pathway cofactor biosynthesis; adenosylcobalamin biosynthesis; sirohydrochlorin from precorrin-2: step 1/1. It participates in porphyrin-containing compound metabolism; siroheme biosynthesis; precorrin-2 from uroporphyrinogen III: step 1/1. The protein operates within porphyrin-containing compound metabolism; siroheme biosynthesis; siroheme from sirohydrochlorin: step 1/1. Its pathway is porphyrin-containing compound metabolism; siroheme biosynthesis; sirohydrochlorin from precorrin-2: step 1/1. Its function is as follows. Multifunctional enzyme that catalyzes the SAM-dependent methylations of uroporphyrinogen III at position C-2 and C-7 to form precorrin-2 via precorrin-1. Then it catalyzes the NAD-dependent ring dehydrogenation of precorrin-2 to yield sirohydrochlorin. Finally, it catalyzes the ferrochelation of sirohydrochlorin to yield siroheme. The polypeptide is Siroheme synthase (Neisseria meningitidis serogroup A / serotype 4A (strain DSM 15465 / Z2491)).